The chain runs to 171 residues: Protein-export protein SecB (171 aa).

This sequence belongs to the SecB family. In terms of assembly, homotetramer, a dimer of dimers. One homotetramer interacts with 1 SecA dimer.

It localises to the cytoplasm. Functionally, one of the proteins required for the normal export of preproteins out of the cell cytoplasm. It is a molecular chaperone that binds to a subset of precursor proteins, maintaining them in a translocation-competent state. It also specifically binds to its receptor SecA. This Xanthomonas oryzae pv. oryzae (strain MAFF 311018) protein is Protein-export protein SecB.